Reading from the N-terminus, the 70-residue chain is Large ribosomal subunit protein bL31 (70 aa).

Zn(2+)-binding residues include cysteine 16, cysteine 18, cysteine 37, and cysteine 40.

Belongs to the bacterial ribosomal protein bL31 family. Type A subfamily. Part of the 50S ribosomal subunit. Zn(2+) is required as a cofactor.

Functionally, binds the 23S rRNA. In Shewanella amazonensis (strain ATCC BAA-1098 / SB2B), this protein is Large ribosomal subunit protein bL31.